The sequence spans 377 residues: MHVLVLGAGQLARMMSLAGAPLNIQISAYDVTTGDVVHPLTLHLLGHGLEQAIEYVDVITAEFEHIPHDVLAICQASGKFLPSSEAIKAGGDRRLEKALLDHAGVRNANYYVIETREDFNKAIEHVGIPMVLKSALGGYDGKGQWRLKDAAQIETLWQEMAACIAATPTQAIVAEEFVPFQREVSLIGARGKEGQIEVYPLAENIHVNGVLSLSTAIDSPDLQEQAKHMFTAVAETLNYVGVLALEFFDVDGQLLVNEIAPRVHNSGHWTQQGAETCQFENHLRAVCGLPLGSTKLVRETSMINILGEDTLPASVMAMDGCHIHWYGKEKRAGRKMGHINVCGDYSGELQRRLCALANVLDEKAFPAVHEFAKKWQA.

ATP is bound by residues Arg-93, Lys-133, 138–144, 175–178, Glu-183, His-206, and 257–258; these read GYDGKGQ, EEFV, and NE. Residues 97–287 form the ATP-grasp domain; it reads KALLDHAGVR…QFENHLRAVC (191 aa).

The protein belongs to the PurK/PurT family. Homodimer.

The enzyme catalyses 5-amino-1-(5-phospho-beta-D-ribosyl)imidazole + hydrogencarbonate + ATP = 5-carboxyamino-1-(5-phospho-D-ribosyl)imidazole + ADP + phosphate + 2 H(+). It functions in the pathway purine metabolism; IMP biosynthesis via de novo pathway; 5-amino-1-(5-phospho-D-ribosyl)imidazole-4-carboxylate from 5-amino-1-(5-phospho-D-ribosyl)imidazole (N5-CAIR route): step 1/2. Catalyzes the ATP-dependent conversion of 5-aminoimidazole ribonucleotide (AIR) and HCO(3)(-) to N5-carboxyaminoimidazole ribonucleotide (N5-CAIR). This Vibrio vulnificus (strain CMCP6) protein is N5-carboxyaminoimidazole ribonucleotide synthase.